Consider the following 149-residue polypeptide: Ribonuclease pancreatic (149 aa).

An N-terminal signal peptide occupies residues Met1–Gly25. Positions 32 and 35 each coordinate substrate. His37 serves as the catalytic Proton acceptor. 4 disulfides stabilise this stretch: Cys51–Cys109, Cys65–Cys120, Cys83–Cys135, and Cys90–Cys97. Substrate is bound by residues Lys66–Thr70, Lys91, and Arg110. His144 serves as the catalytic Proton donor.

This sequence belongs to the pancreatic ribonuclease family. In terms of assembly, monomer. Interacts with and forms tight 1:1 complexes with RNH1. Dimerization of two such complexes may occur. Interaction with RNH1 inhibits this protein. As to expression, pancreas.

It localises to the secreted. It carries out the reaction an [RNA] containing cytidine + H2O = an [RNA]-3'-cytidine-3'-phosphate + a 5'-hydroxy-ribonucleotide-3'-[RNA].. It catalyses the reaction an [RNA] containing uridine + H2O = an [RNA]-3'-uridine-3'-phosphate + a 5'-hydroxy-ribonucleotide-3'-[RNA].. Its function is as follows. Endonuclease that catalyzes the cleavage of RNA on the 3' side of pyrimidine nucleotides. Acts on single-stranded and double-stranded RNA. This is Ribonuclease pancreatic (RNASE1) from Leopoldamys edwardsi (Edwards's long-tailed giant rat).